The chain runs to 353 residues: Uroporphyrinogen decarboxylase (353 aa).

Substrate is bound by residues Arg28–Arg32, Asp78, Tyr155, Ser210, and His325.

It belongs to the uroporphyrinogen decarboxylase family. Homodimer.

It localises to the cytoplasm. The enzyme catalyses uroporphyrinogen III + 4 H(+) = coproporphyrinogen III + 4 CO2. Its pathway is porphyrin-containing compound metabolism; protoporphyrin-IX biosynthesis; coproporphyrinogen-III from 5-aminolevulinate: step 4/4. In terms of biological role, catalyzes the decarboxylation of four acetate groups of uroporphyrinogen-III to yield coproporphyrinogen-III. This chain is Uroporphyrinogen decarboxylase, found in Nostoc punctiforme (strain ATCC 29133 / PCC 73102).